A 360-amino-acid chain; its full sequence is Phenylalanine--tRNA ligase alpha subunit (360 aa).

E260 provides a ligand contact to Mg(2+).

This sequence belongs to the class-II aminoacyl-tRNA synthetase family. Phe-tRNA synthetase alpha subunit type 1 subfamily. In terms of assembly, tetramer of two alpha and two beta subunits. It depends on Mg(2+) as a cofactor.

The protein localises to the cytoplasm. The enzyme catalyses tRNA(Phe) + L-phenylalanine + ATP = L-phenylalanyl-tRNA(Phe) + AMP + diphosphate + H(+). The protein is Phenylalanine--tRNA ligase alpha subunit of Sinorhizobium fredii (strain NBRC 101917 / NGR234).